The chain runs to 558 residues: MASSVTGDAETAISADSSTKRRGGGWITFPFMIATLLGLTIAAWGWLLNLIVYLIEEFNVKSIAAAQIANIVSGCICMVPAVAAIASDSFFGTIPVISVSAFISLMGVALLTLTASLDTLRPRPCETASILCQSPSKTQLGVLYTAITLASIGTGGTRFTLATAGANQYEKTKDQGSFFNWFFFTTYLAGAISATAIVYTEDNISWTLGFGLSVAANFFSFLVFVSGKRFYKHDKPLGSPFTSLLCVIFAALRKRKAVVSTNEKDYHNESITMPTKSFRFFNRAALKQEDEVKPDGTIRNPWRLCSVQQVEDFKAVIRIIPLALATIFLSTPIAMQLSLTVLQGLVMDRRLGPSFKIPAGSLQVITLLSTCLFIIVNDRVLYPFYQKLTGKHLTPLQRVGIGHAFNILSMAVTAIVEAKRLKIVQKGHFLGSSSVADMSVLWLFPPLVIVGIGEAFHFPGNVALCYQEFPESMRSTATSITSVVIGICFYTSTALIDLIQRTTAWLPDDINHGRVDNVYWILVIGGVLNLGYFLVCSWLYRYRNLKDDDHKQAANVSH.

Transmembrane regions (helical) follow at residues 31 to 51 (FMIA…LNLI), 63 to 83 (IAAA…PAVA), 90 to 110 (FFGT…GVAL), 140 to 162 (LGVL…FTLA), 178 to 198 (FFNW…TAIV), 204 to 224 (ISWT…FLVF), 319 to 339 (IIPL…QLSL), 357 to 377 (IPAG…IIVN), 399 to 419 (VGIG…VEAK), 440 to 460 (VLWL…HFPG), 479 to 499 (SITS…IDLI), and 518 to 538 (VYWI…VCSW).

It belongs to the major facilitator superfamily. Proton-dependent oligopeptide transporter (POT/PTR) (TC 2.A.17) family. As to expression, expressed in shoots and in the cortex of mature roots. Not expressed in root tip meristematic cells.

Its subcellular location is the cell membrane. Transporter involved in a passive nitrate efflux. Not competent for chloride transport. This chain is Protein NRT1/ PTR FAMILY 2.7 (NPF2.7), found in Arabidopsis thaliana (Mouse-ear cress).